A 696-amino-acid chain; its full sequence is Elongation factor G (696 aa).

One can recognise a tr-type G domain in the interval 8 to 290 (ERYRNIGIMA…AVLDYLPSPL (283 aa)). Residues 17 to 24 (AHIDAGKT), 88 to 92 (DTPGH), and 142 to 145 (NKMD) each bind GTP.

It belongs to the TRAFAC class translation factor GTPase superfamily. Classic translation factor GTPase family. EF-G/EF-2 subfamily.

The protein resides in the cytoplasm. Functionally, catalyzes the GTP-dependent ribosomal translocation step during translation elongation. During this step, the ribosome changes from the pre-translocational (PRE) to the post-translocational (POST) state as the newly formed A-site-bound peptidyl-tRNA and P-site-bound deacylated tRNA move to the P and E sites, respectively. Catalyzes the coordinated movement of the two tRNA molecules, the mRNA and conformational changes in the ribosome. This chain is Elongation factor G, found in Nitrosomonas europaea (strain ATCC 19718 / CIP 103999 / KCTC 2705 / NBRC 14298).